We begin with the raw amino-acid sequence, 240 residues long: Glutathione S-transferase theta-1 (240 aa).

The 81-residue stretch at 2 to 82 folds into the GST N-terminal domain; it reads GLELYLDLLS…YLARKYKVPD (81 aa). Glutathione-binding positions include H40, 53–54, and 66–67; these read KV and ES. Residues 88 to 226 form the GST C-terminal domain; it reads DLQACARVDE…AKDSQPADPT (139 aa).

This sequence belongs to the GST superfamily. Theta family. Homodimer.

It is found in the cytoplasm. It catalyses the reaction RX + glutathione = an S-substituted glutathione + a halide anion + H(+). In terms of biological role, conjugation of reduced glutathione to a wide number of exogenous and endogenous hydrophobic electrophiles. Also binds steroids, bilirubin, carcinogens and numerous organic anions. Has dichloromethane dehalogenase activity. This Bos taurus (Bovine) protein is Glutathione S-transferase theta-1 (GSTT1).